A 166-amino-acid polypeptide reads, in one-letter code: UPF0304 protein VV1_2093 (166 aa).

Belongs to the UPF0304 family.

The chain is UPF0304 protein VV1_2093 from Vibrio vulnificus (strain CMCP6).